Consider the following 600-residue polypeptide: Epidermal growth factor receptor kinase substrate 8-like protein 3 (600 aa).

Residues 28 to 155 (QHRVEHLMTC…ALEEELEERP (128 aa)) form the PTB domain. Disordered regions lie at residues 152-245 (EERP…PERD) and 429-452 (LHFP…PLSS). Positions 204-214 (SERSISPSSRS) are enriched in low complexity. Position 238 is a phosphoserine (Ser-238). The SH3 domain occupies 457–516 (RAALKMQVLYEFEARNAQELTVAQGEILEVLDQSKRWWLVKNEAGLTGYIPSNILEPLPA).

The protein belongs to the EPS8 family. Interacts with ABI1. Part of a complex that contains SOS1, ABI1 and EPS8L2. Interacts with FASLG. As to expression, detected in embryonic gut. Detected in adult testis, placenta, adrenal gland and intestine.

Its subcellular location is the cytoplasm. The polypeptide is Epidermal growth factor receptor kinase substrate 8-like protein 3 (Eps8l3) (Mus musculus (Mouse)).